We begin with the raw amino-acid sequence, 126 residues long: Phosphoribosyl-AMP cyclohydrolase (126 aa).

Asp76 provides a ligand contact to Mg(2+). Cys77 contributes to the Zn(2+) binding site. Mg(2+) contacts are provided by Asp78 and Asp80. The Zn(2+) site is built by Cys94 and Cys101.

This sequence belongs to the PRA-CH family. Homodimer. Requires Mg(2+) as cofactor. The cofactor is Zn(2+).

It localises to the cytoplasm. It carries out the reaction 1-(5-phospho-beta-D-ribosyl)-5'-AMP + H2O = 1-(5-phospho-beta-D-ribosyl)-5-[(5-phospho-beta-D-ribosylamino)methylideneamino]imidazole-4-carboxamide. Its pathway is amino-acid biosynthesis; L-histidine biosynthesis; L-histidine from 5-phospho-alpha-D-ribose 1-diphosphate: step 3/9. Catalyzes the hydrolysis of the adenine ring of phosphoribosyl-AMP. The polypeptide is Phosphoribosyl-AMP cyclohydrolase (Nitratidesulfovibrio vulgaris (strain ATCC 29579 / DSM 644 / CCUG 34227 / NCIMB 8303 / VKM B-1760 / Hildenborough) (Desulfovibrio vulgaris)).